The sequence spans 288 residues: RELT-like protein 1 (288 aa).

A signal peptide spans 1–23 (MAPPAASGIPSIAPSLGPTAVWL). Residues 24–57 (GNRSDLGDVQALASRDLPTTTVTAGNNNKPEHLE) lie on the Extracellular side of the membrane. A glycan (N-linked (GlcNAc...) asparagine) is linked at Asn-25. Residues 58–78 (YVAFVLVPVFFIMGLLGILIC) form a helical membrane-spanning segment. The Cytoplasmic segment spans residues 79–288 (HVLKKKGYRC…EGTQERRSSE (210 aa)). 2 disordered regions span residues 145-172 (FEPESPMSPNAPGSPTSPGSPLSPGAAS) and 237-288 (HKSN…RSSE). The segment covering 152–172 (SPNAPGSPTSPGSPLSPGAAS) has biased composition (low complexity). Positions 237–246 (HKSNSKERKS) are enriched in basic and acidic residues.

It belongs to the RELT family.

It localises to the cell membrane. The protein is RELT-like protein 1 (RELL1) of Gallus gallus (Chicken).